The sequence spans 151 residues: Large ribosomal subunit protein uL22 (151 aa).

It belongs to the universal ribosomal protein uL22 family. Part of the 50S ribosomal subunit.

Functionally, this protein binds specifically to 23S rRNA. It makes multiple contacts with different domains of the 23S rRNA in the assembled 50S subunit and ribosome. The globular domain of the protein is located near the polypeptide exit tunnel on the outside of the subunit, while an extended beta-hairpin is found that lines the wall of the exit tunnel in the center of the 70S ribosome. This chain is Large ribosomal subunit protein uL22, found in Methanococcoides burtonii (strain DSM 6242 / NBRC 107633 / OCM 468 / ACE-M).